The following is a 709-amino-acid chain: ATP-dependent zinc metalloprotease YME1 homolog (709 aa).

Positions 152-182 are disordered; that stretch reads FTSDTSSTVSSTPSLNHSLQNSMPPSTPTPP. Over residues 153–165 the composition is skewed to low complexity; sequence TSDTSSTVSSTPS. Residues 217-239 form a helical membrane-spanning segment; that stretch reads IFKFIAGLSVASYFVLLGMSIFA. 307–314 is a binding site for ATP; it reads GPPGTGKT. His-530 contributes to the Zn(2+) binding site. Glu-531 is an active-site residue. Residues His-534 and Asp-608 each coordinate Zn(2+).

In the N-terminal section; belongs to the AAA ATPase family. It in the C-terminal section; belongs to the peptidase M41 family. Zn(2+) is required as a cofactor.

It localises to the mitochondrion membrane. In terms of biological role, putative ATP-dependent protease. This is ATP-dependent zinc metalloprotease YME1 homolog from Schizosaccharomyces pombe (strain 972 / ATCC 24843) (Fission yeast).